Consider the following 705-residue polypeptide: Polyribonucleotide nucleotidyltransferase (705 aa).

Positions 486 and 492 each coordinate Mg(2+). One can recognise a KH domain in the interval 553-612 (PQFHTMKVDPEKIRDIIGKGGATIRSITEETGASIDIDDDGTVKIYGDDGDSLQGAINRI). The region spanning 622–690 (GEVYKGKVVR…QRGRIKLSIK (69 aa)) is the S1 motif domain.

This sequence belongs to the polyribonucleotide nucleotidyltransferase family. Component of the RNA degradosome, which is a multiprotein complex involved in RNA processing and mRNA degradation. The cofactor is Mg(2+).

Its subcellular location is the cytoplasm. The enzyme catalyses RNA(n+1) + phosphate = RNA(n) + a ribonucleoside 5'-diphosphate. Its function is as follows. Involved in mRNA degradation. Catalyzes the phosphorolysis of single-stranded polyribonucleotides processively in the 3'- to 5'-direction. The polypeptide is Polyribonucleotide nucleotidyltransferase (Teredinibacter turnerae (strain ATCC 39867 / T7901)).